The following is a 137-amino-acid chain: Large-conductance mechanosensitive channel (137 aa).

3 consecutive transmembrane segments (helical) span residues 15-35 (IDLA…NSIV), 38-58 (ILMP…MFIQ), and 80-100 (GNFI…FLFV).

Belongs to the MscL family. Homopentamer.

It localises to the cell inner membrane. Channel that opens in response to stretch forces in the membrane lipid bilayer. May participate in the regulation of osmotic pressure changes within the cell. This is Large-conductance mechanosensitive channel from Bartonella quintana (strain Toulouse) (Rochalimaea quintana).